Reading from the N-terminus, the 873-residue chain is MEDAHDQSSRPLSFELESNHHSLRQLTPPICTSYPSNENEDVSQSLLPAPLNDRYPPISSQWPPGTIQQNPSEDPHQQTESEVASQTSWQRRQTTKSGSGLRRYPTRRINLVQGSVLSVDYPVPSAIRNSVEAKYRDSNDATAEEFTHLRYTAATCDPDDFTLRNGYNLRAAMFNRHTEILIAITYYNEDKVLTARTLHGVMQNIRDIVNLKKTQFWDKGGPAWQKIVVCLIFDGIGPCDKNTLDVLATVGIYQDGIMKHDVDGKETVAHIFEYTTQLSITPSQQLIRPQVDNPDNLPPVQMIFCLKQKNSKKINSHRWLFNAFGRVLNPEVCILIDAGTKPGHKSLLALWEAFYNNKHLGGACGEIHALLGPRWEKLVNPLVAAQNFEYKISNILDKPLESAFGYVSVLPGAFSAYRYRAIMGRPLEQYFHGDHTLSKKLGKKGIEGMNIFKKNMFLAEDRILCFELVAKAGYKWTLSYVKASKGETDVPEAPPEFLSQRRRWLNGSFAASLYSVMHFNRIYKSGHNLLRLVFLHVQLVYNICQLTMTWFSLASYWLTTSVIMDIVGTPSATIKNKGWPFGNDASPIVNNIIKALYLAFLMQQFFLALGNRPKGSQTSYILTFLYFAIVQLYILILSFYLVAQAFSGGNIDLDFDNGAGGFVGSFFTSTTGLVLIALVSTYGTYIIASILYCDPWHLLTSSWAYFLGMPLTINVLNVYAFCNWHDVSWGTKGSDDTASLPSAKTMKSVTQKSFVEEVDKPQVDIDIDFECTVRRALSPWQEPKEKKEVQLEDSYKTFRTNLVLLWTLCNGLLALLINNDSVRNLCLTTTSTDRTAWYFKVILWATSGLSVFRFLGALWFLGKTGLLCCFSRR.

Positions 1–105 (MEDAHDQSSR…KSGSGLRRYP (105 aa)) are disordered. Composition is skewed to polar residues over residues 33–46 (SYPSNENEDVSQSL), 58–72 (ISSQWPPGTIQQNPS), and 80–98 (ESEVASQTSWQRRQTTKSG). Asn-506 carries an N-linked (GlcNAc...) asparagine glycan. A run of 7 helical transmembrane segments spans residues 532–554 (LVFLHVQLVYNICQLTMTWFSLA), 588–608 (IVNNIIKALYLAFLMQQFFLA), 621–641 (ILTFLYFAIVQLYILILSFYL), 672–692 (GLVLIALVSTYGTYIIASILY), 702–722 (SWAYFLGMPLTINVLNVYAFC), 802–822 (LVLLWTLCNGLLALLINNDSV), and 841–861 (VILWATSGLSVFRFLGALWFL).

The protein belongs to the chitin synthase family. Class III subfamily.

It localises to the cell membrane. It catalyses the reaction [(1-&gt;4)-N-acetyl-beta-D-glucosaminyl](n) + UDP-N-acetyl-alpha-D-glucosamine = [(1-&gt;4)-N-acetyl-beta-D-glucosaminyl](n+1) + UDP + H(+). In terms of biological role, polymerizes chitin, a structural polymer of the cell wall and septum, by transferring the sugar moiety of UDP-GlcNAc to the non-reducing end of the growing chitin polymer. Plays an important role in septal growth or maintenance. Mediates colony spore formation. The protein is Chitin synthase F of Aspergillus niger (strain ATCC MYA-4892 / CBS 513.88 / FGSC A1513).